We begin with the raw amino-acid sequence, 390 residues long: Protein-glutamate methylesterase/protein-glutamine glutaminase (390 aa).

Positions arginine 4–glutamine 121 constitute a Response regulatory domain. Aspartate 55 carries the post-translational modification 4-aspartylphosphate. Residues glycine 130–arginine 198 form a disordered region. 2 stretches are compositionally biased toward low complexity: residues proline 136–aspartate 148 and glutamate 179–proline 193. The 190-residue stretch at proline 201–arginine 390 folds into the CheB-type methylesterase domain. Active-site residues include serine 212, histidine 239, and aspartate 335.

It belongs to the CheB family. Phosphorylated by CheA. Phosphorylation of the N-terminal regulatory domain activates the methylesterase activity.

It is found in the cytoplasm. It carries out the reaction [protein]-L-glutamate 5-O-methyl ester + H2O = L-glutamyl-[protein] + methanol + H(+). The enzyme catalyses L-glutaminyl-[protein] + H2O = L-glutamyl-[protein] + NH4(+). Functionally, involved in chemotaxis. Part of a chemotaxis signal transduction system that modulates chemotaxis in response to various stimuli. Catalyzes the demethylation of specific methylglutamate residues introduced into the chemoreceptors (methyl-accepting chemotaxis proteins or MCP) by CheR. Also mediates the irreversible deamidation of specific glutamine residues to glutamic acid. This chain is Protein-glutamate methylesterase/protein-glutamine glutaminase, found in Alkalilimnicola ehrlichii (strain ATCC BAA-1101 / DSM 17681 / MLHE-1).